The primary structure comprises 949 residues: Valine--tRNA ligase (949 aa).

The 'HIGH' region signature appears at 40-50; the sequence is PNVTGSLHMGH. The short motif at 553–557 is the 'KMSKS' region element; the sequence is KMSKS. K556 contributes to the ATP binding site. A coiled-coil region spans residues 877–949; that stretch reads MAGLIDKEAE…QEQQDKIKAL (73 aa).

The protein belongs to the class-I aminoacyl-tRNA synthetase family. ValS type 1 subfamily. In terms of assembly, monomer.

It localises to the cytoplasm. The catalysed reaction is tRNA(Val) + L-valine + ATP = L-valyl-tRNA(Val) + AMP + diphosphate. In terms of biological role, catalyzes the attachment of valine to tRNA(Val). As ValRS can inadvertently accommodate and process structurally similar amino acids such as threonine, to avoid such errors, it has a 'posttransfer' editing activity that hydrolyzes mischarged Thr-tRNA(Val) in a tRNA-dependent manner. The chain is Valine--tRNA ligase from Idiomarina loihiensis (strain ATCC BAA-735 / DSM 15497 / L2-TR).